Reading from the N-terminus, the 70-residue chain is Large ribosomal subunit protein bL31 (70 aa).

The Zn(2+) site is built by C16, C18, C37, and C40.

It belongs to the bacterial ribosomal protein bL31 family. Type A subfamily. In terms of assembly, part of the 50S ribosomal subunit. Zn(2+) serves as cofactor.

In terms of biological role, binds the 23S rRNA. The chain is Large ribosomal subunit protein bL31 from Salmonella agona (strain SL483).